Reading from the N-terminus, the 309-residue chain is Probable copper-dependent oxygenase clz3 (309 aa).

Residues asparagine 9 and asparagine 249 are each glycosylated (N-linked (GlcNAc...) asparagine). A helical transmembrane segment spans residues 257–277; sequence FAVPLAAIAFIALIISGGYVI.

Belongs to the clz3 oxygenase family.

It localises to the membrane. Its pathway is secondary metabolite biosynthesis. Probable copper-dependent oxygenase; part of the gene cluster that mediates the biosynthesis of squalestatin S1 (SQS1, also known as zaragozic acid A), a heavily oxidized fungal polyketide that offers potent cholesterol lowering activity by targeting squalene synthase (SS). SQS1 is composed of a 2,8-dioxobicyclic[3.2.1]octane-3,4,5-tricarboxyclic acid core that is connected to two lipophilic polyketide arms. These initial steps feature the priming of an unusual benzoic acid starter unit onto the highly reducing polyketide synthase clz14, followed by oxaloacetate extension and product release to generate a tricarboxylic acid containing product. The phenylalanine ammonia lyase (PAL) clz10 and the acyl-CoA ligase clz12 are involved in transforming phenylalanine into benzoyl-CoA. The citrate synthase-like protein clz17 is involved in connecting the C-alpha-carbons of the hexaketide chain and oxaloacetate to afford the tricarboxylic acid unit. The potential hydrolytic enzymes, clz11 and clz13, are in close proximity to pks2 and may participate in product release. On the other side, the tetraketide arm is synthesized by a the squalestatin tetraketide synthase clz2 and enzymatically esterified to the core in the last biosynthetic step, by the acetyltransferase clz6. The biosynthesis of the tetraketide must involve 3 rounds of chain extension. After the first and second rounds methyl-transfer occurs, and in all rounds of extension the ketoreductase and dehydratase are active. The enoyl reductase and C-MeT of clz2 are not active in the final round of extension. The acetyltransferase clz6 appears to have a broad substrate selectivity for its acyl CoA substrate, allowing the in vitro synthesis of novel squalestatins. The biosynthesis of SQS1 requires several oxidative steps likely performed by oxidoreductases clz3, clz15 and clz16. Finally, in support of the identification of the cluster as being responsible for SQS1 production, the cluster contains a gene encoding a putative squalene synthase (SS) clz20, suggesting a likely mechanism for self-resistance. This Cochliobolus lunatus (Filamentous fungus) protein is Probable copper-dependent oxygenase clz3.